Here is a 566-residue protein sequence, read N- to C-terminus: MPRGFLVKRTKRTGGLYRVRLAERVFPLLGPQGAPPFLEEAPSASLPGAERATPPTREEPGKGLTAEAAREQSGSPCRAAGVSPGTGGREGAEWRAGGREGPGPSPSPSPSPAKPAGAELRRAFLERCLSSPVSAESFPGGAAAVAAFSCSVAPAAAPTPGEQFLLPLRAPFPEPALQPDPAPLSAALQSLKRAAGGERRGKAPTDCASGPAAAGIKKPKAMRKLSFADEVTTSPVLGLKIKEEEPGAPSRGLGGSRTPLGEFICQLCKEQYADPFALAQHRCSRIVRVEYRCPECDKVFSCPANLASHRRWHKPRPAAANAATVSSADGKPPSSSSSSSRDSGAIASFLAEGKENSRIERTADQHPQARDSSGADQHPDSAPRQGLQVLTHPEPPLPQGPYTEGVLGRRVPVPGSTSGGRGSEIFVCPYCHKKFRRQAYLRKHLSTHEAGSARALAPGFGSERGAPLAFACPLCGAHFPTADIREKHRLWHAVREELLLPALAGAPPETSGPSGPSDGSAQQIFSCKHCPSTFFSSPGLTRHINKCHPSESRQVLLLQMPLRPGC.

Residues 1 to 20 are SNAG domain; that stretch reads MPRGFLVKRTKRTGGLYRVR. Residues 32–117 form a disordered region; the sequence is QGAPPFLEEA…PSPSPAKPAG (86 aa). Pro residues predominate over residues 103–113; it reads GPSPSPSPSPA. The C2H2-type 1; atypical zinc-finger motif lies at 263–283; it reads FICQLCKEQYADPFALAQHRC. The C2H2-type 2 zinc finger occupies 291–313; it reads YRCPECDKVFSCPANLASHRRWH. The disordered stretch occupies residues 310 to 418; sequence RRWHKPRPAA…RRVPVPGSTS (109 aa). The span at 318–348 shows a compositional bias: low complexity; that stretch reads AAANAATVSSADGKPPSSSSSSSRDSGAIAS. Positions 352–369 are enriched in basic and acidic residues; that stretch reads EGKENSRIERTADQHPQA. 3 consecutive C2H2-type zinc fingers follow at residues 426-448, 470-492, and 525-548; these read FVCP…LSTH, FACP…RLWH, and FSCK…NKCH.

Expressed in heart, liver, skeletal muscle, kidney and pancreas, and, to a lesser extent, in brain, lung and spleen. In the pancreas, expressed in islet cells, including insulin- and glucagon-producing alpha- and beta-cells, but not in acinar cells (at protein level). Detected in adrenal glands, particularly in the deeper layer of the cortex (at protein level).

The protein resides in the cytoplasm. Its subcellular location is the nucleus. May function as a growth suppressor or tumor suppressor in liver cells and in certain neurons. This Homo sapiens (Human) protein is Insulinoma-associated protein 2 (INSM2).